Consider the following 334-residue polypeptide: Ornithine carbamoyltransferase (334 aa).

Carbamoyl phosphate-binding positions include 57 to 60, glutamine 84, arginine 108, and 135 to 138; these read STRT and HPTQ. Residues asparagine 168, aspartate 232, and 236 to 237 each bind L-ornithine; that span reads SM. Residues 274 to 275 and arginine 321 each bind carbamoyl phosphate; that span reads CL.

This sequence belongs to the aspartate/ornithine carbamoyltransferase superfamily. OTCase family.

Its subcellular location is the cytoplasm. It carries out the reaction carbamoyl phosphate + L-ornithine = L-citrulline + phosphate + H(+). It participates in amino-acid biosynthesis; L-arginine biosynthesis; L-arginine from L-ornithine and carbamoyl phosphate: step 1/3. In terms of biological role, reversibly catalyzes the transfer of the carbamoyl group from carbamoyl phosphate (CP) to the N(epsilon) atom of ornithine (ORN) to produce L-citrulline. This chain is Ornithine carbamoyltransferase, found in Actinobacillus pleuropneumoniae serotype 5b (strain L20).